The sequence spans 414 residues: Esterase FrsA (414 aa).

This sequence belongs to the FrsA family.

The catalysed reaction is a carboxylic ester + H2O = an alcohol + a carboxylate + H(+). In terms of biological role, catalyzes the hydrolysis of esters. This is Esterase FrsA from Klebsiella pneumoniae subsp. pneumoniae (strain ATCC 700721 / MGH 78578).